The primary structure comprises 91 residues: Small ribosomal subunit protein uS15 (91 aa).

It belongs to the universal ribosomal protein uS15 family. Part of the 30S ribosomal subunit. Forms a bridge to the 50S subunit in the 70S ribosome, contacting the 23S rRNA.

In terms of biological role, one of the primary rRNA binding proteins, it binds directly to 16S rRNA where it helps nucleate assembly of the platform of the 30S subunit by binding and bridging several RNA helices of the 16S rRNA. Forms an intersubunit bridge (bridge B4) with the 23S rRNA of the 50S subunit in the ribosome. This chain is Small ribosomal subunit protein uS15, found in Deinococcus radiodurans (strain ATCC 13939 / DSM 20539 / JCM 16871 / CCUG 27074 / LMG 4051 / NBRC 15346 / NCIMB 9279 / VKM B-1422 / R1).